We begin with the raw amino-acid sequence, 692 residues long: Methionine--tRNA ligase (692 aa).

Positions 12–22 (PYANGPLHLGH) match the 'HIGH' region motif. 4 residues coordinate Zn(2+): cysteine 143, cysteine 146, cysteine 156, and cysteine 159. The 'KMSKS' region motif lies at 330–334 (KMSKS). Lysine 333 contacts ATP. A compositionally biased stretch (low complexity) spans 554-563 (AAAAPAAKPA). Residues 554-575 (AAAAPAAKPAAPAPAPAPAKDE) are disordered. Residues 589–692 (DFAKLDLRIG…SGAQPGMPVR (104 aa)) form the tRNA-binding domain.

It belongs to the class-I aminoacyl-tRNA synthetase family. MetG type 1 subfamily. As to quaternary structure, homodimer. Zn(2+) serves as cofactor.

The protein localises to the cytoplasm. The catalysed reaction is tRNA(Met) + L-methionine + ATP = L-methionyl-tRNA(Met) + AMP + diphosphate. Its function is as follows. Is required not only for elongation of protein synthesis but also for the initiation of all mRNA translation through initiator tRNA(fMet) aminoacylation. This is Methionine--tRNA ligase from Stenotrophomonas maltophilia (strain K279a).